We begin with the raw amino-acid sequence, 241 residues long: Megakaryocyte and platelet inhibitory receptor G6b (241 aa).

The signal sequence occupies residues 1–17; sequence MAVFLQLLPLLLSRAQG. Residues 18–142 lie on the Extracellular side of the membrane; sequence NPGASLDGRP…GPTHGSVYPQ (125 aa). A glycan (N-linked (GlcNAc...) asparagine) is linked at Asn-32. Residues 143–163 form a helical membrane-spanning segment; the sequence is LLIPLLGAGLVLGLGALGLVW. Topologically, residues 164–241 are cytoplasmic; it reads WLHRRLPPQP…DASTIYAVVV (78 aa). 2 short sequence motifs (ITIM motif) span residues 209-214 and 235-240; these read LLYADL and TIYAVV. Position 211 is a phosphotyrosine (Tyr-211).

In terms of assembly, interacts (via ITIM motif) with PTPN6 and PTPN11. Binds to heparin. All isoforms are N-glycosylated. Post-translationally, isoform E is O-glycosylated. In terms of processing, phosphorylated. As to expression, expressed in platelets. Expressed in a restricted set of hematopoietic cell lines including the erythroleukemia cell line K-562 and the T-cell leukemia cell lines MOLT-4 and Jurkat. Not detected in the monocyte-like cell line U-937, the B-cell-like cell line Raji, the fibroblast cell lines TK and HeLa, or the natural killer cell lines NKL, NK 62 and YT.

It is found in the endoplasmic reticulum. The protein resides in the golgi apparatus. The protein localises to the cell membrane. Inhibitory receptor that acts as a critical regulator of hematopoietic lineage differentiation, megakaryocyte function and platelet production. Inhibits platelet aggregation and activation by agonists such as ADP and collagen-related peptide. This regulation of megakaryocate function as well as platelet production ann activation is done through the inhibition (via the 2 ITIM motifs) of the receptors CLEC1B and GP6:FcRgamma signaling. Appears to operate in a calcium-independent manner. Functionally, isoform B, displayed in this entry, is the only isoform to contain both a transmembrane region and 2 immunoreceptor tyrosine-based inhibitor motifs (ITIMs) and, thus, the only one which probably has a role of inhibitory receptor. Isoform A may be the activating counterpart of isoform B. The sequence is that of Megakaryocyte and platelet inhibitory receptor G6b from Homo sapiens (Human).